Here is a 206-residue protein sequence, read N- to C-terminus: MHTCRAPFMLHRVMIPPDPIQRFAELFERAKQAIAVDPNAMVVATVGDDGRPSARVVLLKDFDARGFVFYTNHESRKGREARAHPYAALCFYWQPLNEQVRVEGRVERVTDAEADAYFQSRARGSQVGAWASLQSQPLATREELEARVAEVEQKYAGQPVPRPPHWSGFRVVPDRIEFWHAQESRLHDRHVYLREDGGWRTQMLYP.

FMN contacts are provided by residues 55–60, 70–71, R76, K77, and Q99; these read RVVLLK and YT. K60 contributes to the substrate binding site. Positions 117, 121, and 125 each coordinate substrate. Residues 134 to 135 and W179 each bind FMN; that span reads QS. 185–187 lines the substrate pocket; the sequence is RLH. R189 provides a ligand contact to FMN.

The protein belongs to the pyridoxamine 5'-phosphate oxidase family. As to quaternary structure, homodimer. It depends on FMN as a cofactor.

It catalyses the reaction pyridoxamine 5'-phosphate + O2 + H2O = pyridoxal 5'-phosphate + H2O2 + NH4(+). The enzyme catalyses pyridoxine 5'-phosphate + O2 = pyridoxal 5'-phosphate + H2O2. Its pathway is cofactor metabolism; pyridoxal 5'-phosphate salvage; pyridoxal 5'-phosphate from pyridoxamine 5'-phosphate: step 1/1. It functions in the pathway cofactor metabolism; pyridoxal 5'-phosphate salvage; pyridoxal 5'-phosphate from pyridoxine 5'-phosphate: step 1/1. Its function is as follows. Catalyzes the oxidation of either pyridoxine 5'-phosphate (PNP) or pyridoxamine 5'-phosphate (PMP) into pyridoxal 5'-phosphate (PLP). The sequence is that of Pyridoxine/pyridoxamine 5'-phosphate oxidase from Myxococcus xanthus (strain DK1622).